The primary structure comprises 166 residues: VHRCLGVLRPLHSLRWGRARYARRVAAVVWVLVLACQAPVLYFVTTSVRGTRITCHDTSARELFSHFVAYSSVMLSLLFAVPFSVILVCYVLMARRLLKPAYGTTGGLPRAKRKSVRTIALVLAVFTLCFLPFHVTRTLYYSFRSLDLSCHTLNAINMAYKITRPL.

The Cytoplasmic portion of the chain corresponds to 1–24 (VHRCLGVLRPLHSLRWGRARYARR). Residues 25–45 (VAAVVWVLVLACQAPVLYFVT) traverse the membrane as a helical segment. At 46-72 (TSVRGTRITCHDTSARELFSHFVAYSS) the chain is on the extracellular side. A helical transmembrane segment spans residues 73 to 93 (VMLSLLFAVPFSVILVCYVLM). Residues 94-115 (ARRLLKPAYGTTGGLPRAKRKS) lie on the Cytoplasmic side of the membrane. Residues 116–136 (VRTIALVLAVFTLCFLPFHVT) traverse the membrane as a helical segment. Over 137–159 (RTLYYSFRSLDLSCHTLNAINMA) the chain is Extracellular. The helical transmembrane segment at 160–166 (YKITRPL) threads the bilayer.

It belongs to the G-protein coupled receptor 1 family.

Its subcellular location is the cell membrane. In terms of biological role, receptor for ATP and UTP coupled to G-proteins that activate a phosphatidylinositol-calcium second messenger system. The polypeptide is P2Y purinoceptor 2 (P2RY2) (Cricetulus griseus (Chinese hamster)).